The sequence spans 391 residues: Transaldolase (391 aa).

The active-site Schiff-base intermediate with substrate is the K134. 2 EF-hand domains span residues 329–364 (TLTH…FDAL) and 365–387 (DANH…VLHL). Ca(2+) is bound by residues D342, D344, D346, E353, D365, N367, D369, K371, and D376.

It belongs to the transaldolase family. Type 1 subfamily.

Its subcellular location is the cytoplasm. It catalyses the reaction D-sedoheptulose 7-phosphate + D-glyceraldehyde 3-phosphate = D-erythrose 4-phosphate + beta-D-fructose 6-phosphate. Its pathway is carbohydrate degradation; pentose phosphate pathway; D-glyceraldehyde 3-phosphate and beta-D-fructose 6-phosphate from D-ribose 5-phosphate and D-xylulose 5-phosphate (non-oxidative stage): step 2/3. In terms of biological role, transaldolase is important for the balance of metabolites in the pentose-phosphate pathway. This is Transaldolase from Thermosynechococcus vestitus (strain NIES-2133 / IAM M-273 / BP-1).